Consider the following 697-residue polypeptide: Putative cryptochrome DASH (697 aa).

The region spanning 5–164 (KLLVYLLRRD…GFKLWHDEKY (160 aa)) is the Photolyase/cryptochrome alpha/beta domain. Disordered regions lie at residues 170–215 (DNGL…FPSW) and 554–697 (FSVT…PPHI). Over residues 188–198 (KTQEPLRERPR) the composition is skewed to basic and acidic residues. The segment covering 560–569 (RGNRRPYRWR) has biased composition (basic residues). Residues 578-590 (GRGGRGGGTGNTS) are compositionally biased toward gly residues. Low complexity-rich tracts occupy residues 659-675 (QQQQ…YAHQ) and 683-697 (RQQQ…PPHI).

It belongs to the DNA photolyase class-1 family. Requires FAD as cofactor. (6R)-5,10-methylene-5,6,7,8-tetrahydrofolate is required as a cofactor.

Its function is as follows. May have a photoreceptor function. The protein is Putative cryptochrome DASH of Gibberella zeae (strain ATCC MYA-4620 / CBS 123657 / FGSC 9075 / NRRL 31084 / PH-1) (Wheat head blight fungus).